We begin with the raw amino-acid sequence, 206 residues long: Alpha-amylase/trypsin inhibitor (206 aa).

Disulfide bonds link cysteine 9-cysteine 205, cysteine 51-cysteine 61, cysteine 66-cysteine 72, cysteine 118-cysteine 194, cysteine 124-cysteine 177, cysteine 132-cysteine 142, cysteine 146-cysteine 155, and cysteine 156-cysteine 164.

This sequence belongs to the thaumatin family.

Inhibits both trypsin and alpha-amylase. Inhibits the growth of some plant fungal pathogens. This chain is Alpha-amylase/trypsin inhibitor, found in Zea mays (Maize).